Reading from the N-terminus, the 258-residue chain is Peptidase inhibitor 15 (258 aa).

The N-terminal stretch at Met-1–Ala-19 is a signal peptide. Positions Ser-20–Arg-60 are excised as a propeptide. Residues Asn-26, Asn-36, and Asn-124 are each glycosylated (N-linked (GlcNAc...) asparagine). The SCP domain occupies Leu-71–Tyr-211.

Belongs to the CRISP family. Post-translationally, N-glycosylated. As to expression, weakly expressed. Expressed at low level in prostate, mammary gland, salivary gland and thyroid gland.

The protein localises to the secreted. Serine protease inhibitor which displays weak inhibitory activity against trypsin. May play a role in facial patterning during embryonic development. This is Peptidase inhibitor 15 (PI15) from Homo sapiens (Human).